Reading from the N-terminus, the 722-residue chain is Polyribonucleotide nucleotidyltransferase (722 aa).

Mg(2+)-binding residues include D495 and D501. Positions 561-620 (PRLYVMKINPEKIREVIGKGGETIRSITKDTGCEINIEEDGTITIASVSSEGAEAAKKRI) constitute a KH domain. The S1 motif domain maps to 630-700 (GKVYEGTVVK…DRGRIRLSIK (71 aa)).

It belongs to the polyribonucleotide nucleotidyltransferase family. Mg(2+) serves as cofactor.

It is found in the cytoplasm. The catalysed reaction is RNA(n+1) + phosphate = RNA(n) + a ribonucleoside 5'-diphosphate. Functionally, involved in mRNA degradation. Catalyzes the phosphorolysis of single-stranded polyribonucleotides processively in the 3'- to 5'-direction. The sequence is that of Polyribonucleotide nucleotidyltransferase from Chromobacterium violaceum (strain ATCC 12472 / DSM 30191 / JCM 1249 / CCUG 213 / NBRC 12614 / NCIMB 9131 / NCTC 9757 / MK).